Consider the following 478-residue polypeptide: 3-ketoacyl-CoA synthase 3 (478 aa).

The first 25 residues, Met-1–Ser-25, serve as a signal peptide directing secretion. The FAE domain maps to Lys-26–Leu-313. Residues Cys-168, His-247, His-345, His-349, His-378, and Asn-382 contribute to the active site.

This sequence belongs to the thiolase-like superfamily. Chalcone/stilbene synthases family. As to expression, expressed in siliques, leaves, stems and seedlings.

It is found in the endoplasmic reticulum. It catalyses the reaction a very-long-chain acyl-CoA + malonyl-CoA + H(+) = a very-long-chain 3-oxoacyl-CoA + CO2 + CoA. Its pathway is lipid metabolism; fatty acid biosynthesis. This chain is 3-ketoacyl-CoA synthase 3, found in Arabidopsis thaliana (Mouse-ear cress).